A 288-amino-acid chain; its full sequence is Bifunctional protein FolD (288 aa).

NADP(+) is bound by residues Gly-166 to Ser-168, Ser-191, and Ile-232.

It belongs to the tetrahydrofolate dehydrogenase/cyclohydrolase family. As to quaternary structure, homodimer.

It catalyses the reaction (6R)-5,10-methylene-5,6,7,8-tetrahydrofolate + NADP(+) = (6R)-5,10-methenyltetrahydrofolate + NADPH. The enzyme catalyses (6R)-5,10-methenyltetrahydrofolate + H2O = (6R)-10-formyltetrahydrofolate + H(+). It participates in one-carbon metabolism; tetrahydrofolate interconversion. Its function is as follows. Catalyzes the oxidation of 5,10-methylenetetrahydrofolate to 5,10-methenyltetrahydrofolate and then the hydrolysis of 5,10-methenyltetrahydrofolate to 10-formyltetrahydrofolate. This Rickettsia massiliae (strain Mtu5) protein is Bifunctional protein FolD.